Consider the following 376-residue polypeptide: GTPase Obg (376 aa).

An Obg domain is found at 2 to 161 (ASFVDEVLIR…RVVHVELRIV (160 aa)). Positions 162 to 328 (ADVGFVGLPN…LQEAFVRLSD (167 aa)) constitute an OBG-type G domain. Residues 168 to 175 (GLPNAGKS), 193 to 197 (FTTRI), 215 to 218 (DVPG), 282 to 285 (TKLD), and 309 to 311 (SVH) each bind GTP. Residues Ser-175 and Thr-195 each coordinate Mg(2+).

The protein belongs to the TRAFAC class OBG-HflX-like GTPase superfamily. OBG GTPase family. As to quaternary structure, monomer. Requires Mg(2+) as cofactor.

Its subcellular location is the cytoplasm. Its function is as follows. An essential GTPase which binds GTP, GDP and possibly (p)ppGpp with moderate affinity, with high nucleotide exchange rates and a fairly low GTP hydrolysis rate. Plays a role in control of the cell cycle, stress response, ribosome biogenesis and in those bacteria that undergo differentiation, in morphogenesis control. The chain is GTPase Obg from Treponema pallidum (strain Nichols).